Consider the following 126-residue polypeptide: Ribosome-binding factor A (126 aa).

The protein belongs to the RbfA family. Monomer. Binds 30S ribosomal subunits, but not 50S ribosomal subunits or 70S ribosomes.

The protein localises to the cytoplasm. Functionally, one of several proteins that assist in the late maturation steps of the functional core of the 30S ribosomal subunit. Associates with free 30S ribosomal subunits (but not with 30S subunits that are part of 70S ribosomes or polysomes). Required for efficient processing of 16S rRNA. May interact with the 5'-terminal helix region of 16S rRNA. The polypeptide is Ribosome-binding factor A (Haemophilus ducreyi (strain 35000HP / ATCC 700724)).